The following is a 305-amino-acid chain: Outer membrane protein assembly factor BamD (305 aa).

A signal peptide spans 1–24; the sequence is MLRIFQGRPAVTIAAVLVAASVAG. Cys-25 carries the N-palmitoyl cysteine lipid modification. Cys-25 carries the S-diacylglycerol cysteine lipid modification. 4 TPR repeats span residues 41-74, 78-111, 113-136, and 174-207; these read VELLYSTGADRLDRGNWNEAVDYFREVERQHPYS, RRSILMTGYAHYMGNQYAEAIGDADRFISLYPGN, SAQYAFYLKAICYFEQIVDVNRDQ, and AGKEMAIGRWYLKNGQTLAAIGRFKAVIERHQTT.

Belongs to the BamD family. As to quaternary structure, part of the Bam complex.

Its subcellular location is the cell outer membrane. Part of the outer membrane protein assembly complex, which is involved in assembly and insertion of beta-barrel proteins into the outer membrane. The chain is Outer membrane protein assembly factor BamD from Caulobacter vibrioides (strain ATCC 19089 / CIP 103742 / CB 15) (Caulobacter crescentus).